A 620-amino-acid chain; its full sequence is Arginine--tRNA ligase (620 aa).

A 'HIGH' region motif is present at residues 147–157 (ANPTGPIHIGG).

This sequence belongs to the class-I aminoacyl-tRNA synthetase family. Monomer.

Its subcellular location is the cytoplasm. It catalyses the reaction tRNA(Arg) + L-arginine + ATP = L-arginyl-tRNA(Arg) + AMP + diphosphate. This is Arginine--tRNA ligase from Bifidobacterium longum (strain DJO10A).